Reading from the N-terminus, the 496-residue chain is MADESETAVKPPAPPLPQMMEGNGNGHEHCSDCENEEDNSYNRGGLSPANDTGAKKKKKKQKKKKEKGSETDSAQDQPVKMNSLPAERIQEIQKAIELFSVGQGPAKTMEEASKRSYQFWDTQPVPKLGEVVNTHGPVEPDKDNIRQEPYTLPQGSTWDALDLGDRGVLKELYTLLNENYVEDDDNMFRFDYSPEFLLWALRPPGWLPQWHCGVRVVSSRKLVGFISAIPANIHIYDTEKKMVEINFLCVHKKLRSKRVAPVLIREITRRIHLEGVFQAVYTAGVVLPKPVGTCRYWHRSLNPRKLIEVKFSHLSRNMTMQRTMKLYRLPETPKTAGLRPMETKDIPVVHQLLTRYLKQFHLTPVMSQEEVEHWFYPQENIIDTFVVENANGEVTDFLSFYTLPSTIMNHPTHKSLKAAYSFYNVHTQTPLLDLMSDALVLAKMKGFDVFNALDLMENKTFLEKLKFGIGDGNLQYYLYNWKCPSMGAEKVGLVLQ.

The segment at Met-1–Asn-82 is disordered. Phosphoserine is present on residues Ser-31 and Ser-47. Residues Lys-55–Glu-66 show a composition bias toward basic residues. Residue Ser-83 is modified to Phosphoserine. Residues Gln-118, Phe-119, Trp-120, Phe-247, Leu-248, Cys-249, Val-250, Ser-256, Arg-258, Val-259, and Ala-260 each contribute to the tetradecanoyl-CoA site.

Belongs to the NMT family.

It localises to the cytoplasm. Its subcellular location is the cytosol. The protein resides in the membrane. The catalysed reaction is N-terminal glycyl-[protein] + tetradecanoyl-CoA = N-tetradecanoylglycyl-[protein] + CoA + H(+). It carries out the reaction N-terminal glycyl-L-lysyl-[protein] + tetradecanoyl-CoA = N-terminal glycyl-(N(6)-tetradecanoyl)-L-lysyl-[protein] + CoA + H(+). Functionally, adds a myristoyl group to the N-terminal glycine residue of certain cellular and viral proteins. Also able to mediate N-terminal lysine myristoylation of proteins: catalyzes myristoylation of ARF6 on both 'Gly-2' and 'Lys-3'. Lysine myristoylation is required to maintain ARF6 on membranes during the GTPase cycle. The sequence is that of Glycylpeptide N-tetradecanoyltransferase 1 (NMT1) from Pongo abelii (Sumatran orangutan).